Consider the following 386-residue polypeptide: AT-hook motif nuclear-localized protein 8 (386 aa).

2 disordered regions span residues 1-175 and 303-372; these read MDSR…LGGT and KQSS…LHPH. Low complexity predominate over residues 54–70; that stretch reads QQQSQTFHQQQQQQMDQ. A compositionally biased stretch (basic residues) spans 101 to 110; that stretch reads VKKKRGRPRK. A Bipartite nuclear localization signal motif is present at residues 102–110; sequence KKKRGRPRK. A DNA-binding region (a.T hook 1) is located at residues 102–114; it reads KKKRGRPRKYTPD. The span at 126–135 shows a compositional bias: polar residues; sequence PLLSAASNSY. Gly residues predominate over residues 136–147; sequence GEGGVGDSGGNG. Residues 155 to 167 constitute a DNA-binding region (a.T hook 2); sequence KRNRGRPPGSSKK. Positions 174-316 constitute a PPC domain; the sequence is GTSGVGFTPH…VNIARGQNPE (143 aa). Composition is skewed to low complexity over residues 328–337 and 361–372; these read GSVSQGPSSE and QQQQQQQPLHPH.

It is found in the nucleus. In terms of biological role, transcription factor that specifically binds AT-rich DNA sequences related to the nuclear matrix attachment regions (MARs). The polypeptide is AT-hook motif nuclear-localized protein 8 (Arabidopsis thaliana (Mouse-ear cress)).